Consider the following 254-residue polypeptide: 4-hydroxy-tetrahydrodipicolinate reductase (254 aa).

An NAD(+)-binding site is contributed by 7–12; the sequence is GASGRI. Arg-35 serves as a coordination point for NADP(+). NAD(+) contacts are provided by residues 91–93 and 115–118; these read GTT and AHNM. His-147 serves as the catalytic Proton donor/acceptor. A (S)-2,3,4,5-tetrahydrodipicolinate-binding site is contributed by His-148. Lys-151 functions as the Proton donor in the catalytic mechanism. Residue 157–158 coordinates (S)-2,3,4,5-tetrahydrodipicolinate; the sequence is GT.

It belongs to the DapB family.

The protein resides in the cytoplasm. It carries out the reaction (S)-2,3,4,5-tetrahydrodipicolinate + NAD(+) + H2O = (2S,4S)-4-hydroxy-2,3,4,5-tetrahydrodipicolinate + NADH + H(+). The enzyme catalyses (S)-2,3,4,5-tetrahydrodipicolinate + NADP(+) + H2O = (2S,4S)-4-hydroxy-2,3,4,5-tetrahydrodipicolinate + NADPH + H(+). The protein operates within amino-acid biosynthesis; L-lysine biosynthesis via DAP pathway; (S)-tetrahydrodipicolinate from L-aspartate: step 4/4. Catalyzes the conversion of 4-hydroxy-tetrahydrodipicolinate (HTPA) to tetrahydrodipicolinate. The chain is 4-hydroxy-tetrahydrodipicolinate reductase from Helicobacter pylori (strain Shi470).